A 105-amino-acid chain; its full sequence is MQYLAAYALVALSGKTPCKADVQAVLKAAGVAIELSRVDALFQELEGKSFDELMTEGRSKLVGSGSAAPAAAASTAGAAVAAAADAKKEASEEEADDDMGFGLFD.

This sequence belongs to the eukaryotic ribosomal protein P1/P2 family. In terms of assembly, P1 and P2 exist as dimers at the large ribosomal subunit. Post-translationally, phosphorylated.

Its function is as follows. Plays an important role in the elongation step of protein synthesis. The chain is Large ribosomal subunit protein P2 (LIP2) from Leishmania braziliensis.